The following is a 162-amino-acid chain: Small ribosomal subunit protein uS12m (162 aa).

A mitochondrion-targeting transit peptide spans 1 to 37 (MIRFAQYARYPVISRLMKPTVISPFQAQAFSSSSVML).

Belongs to the universal ribosomal protein uS12 family. In terms of assembly, component of the mitochondrial small ribosomal subunit (mt-SSU). Mature yeast 74S mitochondrial ribosomes consist of a small (37S) and a large (54S) subunit. The 37S small subunit contains a 15S ribosomal RNA (15S mt-rRNA) and at least 32 different proteins. The 54S large subunit contains a 21S rRNA (21S mt-rRNA) and at least 45 different proteins. uS12m forms part of the decoding center of the mt-SSU.

The protein localises to the mitochondrion. Its function is as follows. Component of the mitochondrial ribosome (mitoribosome), a dedicated translation machinery responsible for the synthesis of mitochondrial genome-encoded proteins, including at least some of the essential transmembrane subunits of the mitochondrial respiratory chain. The mitoribosomes are attached to the mitochondrial inner membrane and translation products are cotranslationally integrated into the membrane. uS12m is required for respiratory growth. The protein is Small ribosomal subunit protein uS12m of Schizosaccharomyces pombe (strain 972 / ATCC 24843) (Fission yeast).